Here is a 155-residue protein sequence, read N- to C-terminus: MAPK regulated corepressor interacting protein 2 (155 aa).

An N-acetylmethionine modification is found at methionine 1. Positions 1 to 59 are disordered; it reads MYTITKGPSKLVAQRRTGPTQQQVESRLGELLKCRHSAPTPQHPRAQPPGPWPLSSPGP. Omega-N-methylarginine is present on arginine 35. Positions 46–56 are enriched in pro residues; sequence AQPPGPWPLSS. Phosphoserine is present on serine 56. Arginine 60 carries the post-translational modification Omega-N-methylarginine. Serine 77 is subject to Phosphoserine.

The protein belongs to the MCRIP family. As to quaternary structure, interacts with DDX6. Interacts with MCRIP1.

The protein localises to the cytoplasm. It is found in the stress granule. Its subcellular location is the nucleus. The protein is MAPK regulated corepressor interacting protein 2 (MCRIP2) of Bos taurus (Bovine).